We begin with the raw amino-acid sequence, 215 residues long: Cytochrome b6 (215 aa).

A helical transmembrane segment spans residues 32–52 (LFYCLGGITLTCFLIQVATGF). Cys35 provides a ligand contact to heme c. Heme b contacts are provided by His86 and His100. The next 3 membrane-spanning stretches (helical) occupy residues 90 to 110 (ASMM…TGGF), 116 to 136 (STWV…VTGY), and 186 to 206 (LHTF…FLMI). Residues His187 and His202 each coordinate heme b.

The protein belongs to the cytochrome b family. PetB subfamily. The 4 large subunits of the cytochrome b6-f complex are cytochrome b6, subunit IV (17 kDa polypeptide, PetD), cytochrome f and the Rieske protein, while the 4 small subunits are PetG, PetL, PetM and PetN. The complex functions as a dimer. The cofactor is heme b. Requires heme c as cofactor.

The protein localises to the plastid. Its subcellular location is the chloroplast thylakoid membrane. Component of the cytochrome b6-f complex, which mediates electron transfer between photosystem II (PSII) and photosystem I (PSI), cyclic electron flow around PSI, and state transitions. In Bigelowiella natans (Pedinomonas minutissima), this protein is Cytochrome b6.